Consider the following 395-residue polypeptide: MVDGRKPHINVGTIGHVDHGKTTLTAALTTVLAKRLSGEGNKSVKYDEIDKAPEEKARGITISTAHVEYETENRHYAHVDCPGHADYIKNMITGAAQMDAAILVVSATDGAMPQTREHILLAKQVGVKDIVVWMNKCDVVDDEEMLSLVEMEIRELLTKYGYPGDDIDVVKGSAVKALEEESADGVWSEKIMELMNALEKIDLPIREKDKPFLMSIEDVFSIPGRGTVVTGRIERGVIKVGDKIDIVGLRDIQSTVCTGVEMFHKALDAGEAGDNAGILLRGIKKEDVERGQVLSAPGQIHSYKGFKAEVYVLKKEEGGRHTPFFSNYQPQFYVRTTDVTGNIKLPDGVEMVMPGDNISIEVNLDKPVAIDKGLRFAIREGGRTIGSGIITEILE.

The tr-type G domain maps to 6 to 205; sequence KPHINVGTIG…NALEKIDLPI (200 aa). The interval 15–22 is G1; the sequence is GHVDHGKT. 15–22 is a GTP binding site; that stretch reads GHVDHGKT. Threonine 22 is a binding site for Mg(2+). The tract at residues 59-63 is G2; the sequence is GITIS. Residues 80 to 83 form a G3 region; that stretch reads DCPG. Residues 80-84 and 135-138 each bind GTP; these read DCPGH and NKCD. The G4 stretch occupies residues 135–138; it reads NKCD. The interval 173 to 175 is G5; the sequence is SAV.

The protein belongs to the TRAFAC class translation factor GTPase superfamily. Classic translation factor GTPase family. EF-Tu/EF-1A subfamily. As to quaternary structure, monomer.

Its subcellular location is the cytoplasm. The enzyme catalyses GTP + H2O = GDP + phosphate + H(+). Functionally, GTP hydrolase that promotes the GTP-dependent binding of aminoacyl-tRNA to the A-site of ribosomes during protein biosynthesis. This Ehrlichia ruminantium (strain Gardel) protein is Elongation factor Tu.